A 251-amino-acid polypeptide reads, in one-letter code: Triosephosphate isomerase (251 aa).

Asparagine 9 to lysine 11 lines the substrate pocket. Histidine 95 serves as the catalytic Electrophile. The Proton acceptor role is filled by glutamate 167. Substrate-binding positions include glycine 173, serine 213, and glycine 234 to glycine 235.

It belongs to the triosephosphate isomerase family. As to quaternary structure, homodimer.

It localises to the cytoplasm. It carries out the reaction D-glyceraldehyde 3-phosphate = dihydroxyacetone phosphate. The protein operates within carbohydrate biosynthesis; gluconeogenesis. It functions in the pathway carbohydrate degradation; glycolysis; D-glyceraldehyde 3-phosphate from glycerone phosphate: step 1/1. Its function is as follows. Involved in the gluconeogenesis. Catalyzes stereospecifically the conversion of dihydroxyacetone phosphate (DHAP) to D-glyceraldehyde-3-phosphate (G3P). In Lactobacillus gasseri (strain ATCC 33323 / DSM 20243 / BCRC 14619 / CIP 102991 / JCM 1131 / KCTC 3163 / NCIMB 11718 / NCTC 13722 / AM63), this protein is Triosephosphate isomerase.